The chain runs to 89 residues: Small ribosomal subunit protein uS15 (89 aa).

Belongs to the universal ribosomal protein uS15 family. Part of the 30S ribosomal subunit. Forms a bridge to the 50S subunit in the 70S ribosome, contacting the 23S rRNA.

One of the primary rRNA binding proteins, it binds directly to 16S rRNA where it helps nucleate assembly of the platform of the 30S subunit by binding and bridging several RNA helices of the 16S rRNA. In terms of biological role, forms an intersubunit bridge (bridge B4) with the 23S rRNA of the 50S subunit in the ribosome. The polypeptide is Small ribosomal subunit protein uS15 (Chloroflexus aurantiacus (strain ATCC 29366 / DSM 635 / J-10-fl)).